We begin with the raw amino-acid sequence, 130 residues long: DNA-directed RNA polymerase subunit omega (130 aa).

The tract at residues E110–E130 is disordered.

The protein belongs to the RNA polymerase subunit omega family. In terms of assembly, the RNAP catalytic core consists of 2 alpha, 1 beta, 1 beta' and 1 omega subunit. When a sigma factor is associated with the core the holoenzyme is formed, which can initiate transcription.

It catalyses the reaction RNA(n) + a ribonucleoside 5'-triphosphate = RNA(n+1) + diphosphate. In terms of biological role, promotes RNA polymerase assembly. Latches the N- and C-terminal regions of the beta' subunit thereby facilitating its interaction with the beta and alpha subunits. This Afipia carboxidovorans (strain ATCC 49405 / DSM 1227 / KCTC 32145 / OM5) (Oligotropha carboxidovorans) protein is DNA-directed RNA polymerase subunit omega.